Here is a 62-residue protein sequence, read N- to C-terminus: Beta-defensin 33 (62 aa).

The N-terminal stretch at 1-20 is a signal peptide; it reads MRLLFLLFLLLVCLAQKTSG. 3 cysteine pairs are disulfide-bonded: Cys30–Cys59, Cys37–Cys52, and Cys45–Cys60.

It belongs to the beta-defensin family.

It is found in the secreted. Functionally, has antibacterial activity. The polypeptide is Beta-defensin 33 (Defb33) (Rattus norvegicus (Rat)).